A 378-amino-acid polypeptide reads, in one-letter code: Carbamoyl phosphate synthase small chain (378 aa).

The CPSase stretch occupies residues 1–188 (MSILKEAYLY…THFAYGTSPN (188 aa)). L-glutamine is bound by residues Ser-49, Gly-244, and Gly-246. Residues 192–378 (KVVAIDFGAK…FEEFAKLCCK (187 aa)) enclose the Glutamine amidotransferase type-1 domain. Residue Cys-272 is the Nucleophile of the active site. Positions 273, 276, 314, and 317 each coordinate L-glutamine. Active-site residues include His-355 and Glu-357.

This sequence belongs to the CarA family. As to quaternary structure, composed of two chains; the small (or glutamine) chain promotes the hydrolysis of glutamine to ammonia, which is used by the large (or ammonia) chain to synthesize carbamoyl phosphate. Tetramer of heterodimers (alpha,beta)4.

The catalysed reaction is hydrogencarbonate + L-glutamine + 2 ATP + H2O = carbamoyl phosphate + L-glutamate + 2 ADP + phosphate + 2 H(+). The enzyme catalyses L-glutamine + H2O = L-glutamate + NH4(+). It participates in amino-acid biosynthesis; L-arginine biosynthesis; carbamoyl phosphate from bicarbonate: step 1/1. The protein operates within pyrimidine metabolism; UMP biosynthesis via de novo pathway; (S)-dihydroorotate from bicarbonate: step 1/3. Small subunit of the glutamine-dependent carbamoyl phosphate synthetase (CPSase). CPSase catalyzes the formation of carbamoyl phosphate from the ammonia moiety of glutamine, carbonate, and phosphate donated by ATP, constituting the first step of 2 biosynthetic pathways, one leading to arginine and/or urea and the other to pyrimidine nucleotides. The small subunit (glutamine amidotransferase) binds and cleaves glutamine to supply the large subunit with the substrate ammonia. The sequence is that of Carbamoyl phosphate synthase small chain from Helicobacter hepaticus (strain ATCC 51449 / 3B1).